The chain runs to 20 residues: Snaclec ophioluxin subunit alpha (20 aa).

Residues Cys-4 and Cys-15 are joined by a disulfide bond. In terms of domain architecture, C-type lectin spans 11-20; that stretch reads YDQHCYRIIN.

The protein belongs to the snaclec family. As to quaternary structure, heterodimer of subunits alpha and beta; disulfide-linked. As to expression, expressed by the venom gland.

Its subcellular location is the secreted. In terms of biological role, binds to the platelet and collagen receptor glycoprotein VI (GP6) and activates platelet aggregation. The protein is Snaclec ophioluxin subunit alpha of Ophiophagus hannah (King cobra).